A 473-amino-acid chain; its full sequence is Photosystem II CP43 reaction center protein (473 aa).

Positions 1–14 are excised as a propeptide; it reads MKTLYSLRRFYHVE. At Thr15 the chain carries N-acetylthreonine. Thr15 carries the post-translational modification Phosphothreonine. 5 helical membrane passes run 69–93, 134–155, 178–200, 255–275, and 291–312; these read LFEV…PHLA, LLGP…KDRN, KALY…RKIT, KPFA…LSYS, and WFNN…ASQA. Glu367 serves as a coordination point for [CaMn4O5] cluster. Residues 447 to 471 form a helical membrane-spanning segment; it reads RARAAAAGFEKGIDRDFEPVLSMTP.

Belongs to the PsbB/PsbC family. PsbC subfamily. PSII is composed of 1 copy each of membrane proteins PsbA, PsbB, PsbC, PsbD, PsbE, PsbF, PsbH, PsbI, PsbJ, PsbK, PsbL, PsbM, PsbT, PsbX, PsbY, PsbZ, Psb30/Ycf12, at least 3 peripheral proteins of the oxygen-evolving complex and a large number of cofactors. It forms dimeric complexes. The cofactor is Binds multiple chlorophylls and provides some of the ligands for the Ca-4Mn-5O cluster of the oxygen-evolving complex. It may also provide a ligand for a Cl- that is required for oxygen evolution. PSII binds additional chlorophylls, carotenoids and specific lipids..

Its subcellular location is the plastid. It is found in the chloroplast thylakoid membrane. One of the components of the core complex of photosystem II (PSII). It binds chlorophyll and helps catalyze the primary light-induced photochemical processes of PSII. PSII is a light-driven water:plastoquinone oxidoreductase, using light energy to abstract electrons from H(2)O, generating O(2) and a proton gradient subsequently used for ATP formation. This chain is Photosystem II CP43 reaction center protein, found in Arabis hirsuta (Hairy rock-cress).